A 665-amino-acid chain; its full sequence is Potassium-transporting ATPase ATP-binding subunit (665 aa).

4 consecutive transmembrane segments (helical) span residues 28–48, 56–76, 207–227, and 244–264; these read MFLT…PGFF, YLQF…FSSM, IALT…TASI, and IVLL…AIGI. Catalysis depends on Asp295, which acts as the 4-aspartylphosphate intermediate. ATP is bound by residues Asp332, Glu336, 364–371, and Lys382; that span reads FSSETKYS. Asp501 and Asp505 together coordinate Mg(2+). Transmembrane regions (helical) follow at residues 570-590, 596-616, and 644-664; these read YFVI…VNVL, IVAV…LIPL, and VVVP…LGVV.

The protein belongs to the cation transport ATPase (P-type) (TC 3.A.3) family. Type IA subfamily. The system is composed of three essential subunits: KdpA, KdpB and KdpC.

It is found in the cell membrane. The catalysed reaction is K(+)(out) + ATP + H2O = K(+)(in) + ADP + phosphate + H(+). Its function is as follows. Part of the high-affinity ATP-driven potassium transport (or Kdp) system, which catalyzes the hydrolysis of ATP coupled with the electrogenic transport of potassium into the cytoplasm. This subunit is responsible for energy coupling to the transport system and for the release of the potassium ions to the cytoplasm. The sequence is that of Potassium-transporting ATPase ATP-binding subunit from Thermoplasma acidophilum (strain ATCC 25905 / DSM 1728 / JCM 9062 / NBRC 15155 / AMRC-C165).